We begin with the raw amino-acid sequence, 308 residues long: Beta-carotene hydroxylase 2, chloroplastic (308 aa).

The N-terminal 59 residues, 1 to 59, are a transit peptide targeting the chloroplast; the sequence is MAAARISFSSTSRTSYYRHSPFLGPKPTPTTPSVYPITPFSPNLGSILRCRRRPSFTVC. Helical transmembrane passes span 105–125 and 139–159; these read YLVA…MAVY and FSEM…MEFW. Residues 152 to 279 form the Fatty acid hydroxylase domain; sequence AAVGMEFWAR…KFNGVPYGLF (128 aa). Residues 164-169 carry the Histidine box-1 motif; it reads HKALWH. The Histidine box-2 signature appears at 176-180; sequence HESHH. 2 helical membrane-spanning segments follow: residues 191 to 211 and 215 to 235; these read DVFA…GFFH and IPGL…AYMF. The Histidine box-3 signature appears at 237–242; it reads HDGLVH. The Histidine box-4 motif lies at 263–267; it reads HSLHH.

Belongs to the sterol desaturase family.

It is found in the plastid. The protein localises to the chloroplast membrane. It carries out the reaction all-trans-beta-carotene + 4 reduced [2Fe-2S]-[ferredoxin] + 2 O2 + 4 H(+) = all-trans-zeaxanthin + 4 oxidized [2Fe-2S]-[ferredoxin] + 2 H2O. The catalysed reaction is all-trans-beta-carotene + 2 reduced [2Fe-2S]-[ferredoxin] + O2 + 2 H(+) = beta-cryptoxanthin + 2 oxidized [2Fe-2S]-[ferredoxin] + H2O. It catalyses the reaction beta-cryptoxanthin + 2 reduced [2Fe-2S]-[ferredoxin] + O2 + 2 H(+) = all-trans-zeaxanthin + 2 oxidized [2Fe-2S]-[ferredoxin] + H2O. With respect to regulation, inhibited by o-phenanthroline and 8-hydroxyquinoline. Functionally, nonheme diiron monooxygenase involved in the biosynthesis of xanthophylls. Specific for beta-ring hydroxylations of beta-carotene. Produces beta-cryptoxanthin and zeaxanthin. Uses ferredoxin as an electron donor. The protein is Beta-carotene hydroxylase 2, chloroplastic of Capsicum annuum (Capsicum pepper).